Here is a 157-residue protein sequence, read N- to C-terminus: Thiosulfate sulfurtransferase/rhodanese-like domain-containing protein 3 (157 aa).

The region spanning 52–154 is the Rhodanese domain; the sequence is NSKDIMLIDV…WVTYEISEEK (103 aa). The residue at position 96 (lysine 96) is an N6-succinyllysine. The active-site Cysteine persulfide intermediate is cysteine 114.

This is Thiosulfate sulfurtransferase/rhodanese-like domain-containing protein 3 (Tstd3) from Mus musculus (Mouse).